A 216-amino-acid polypeptide reads, in one-letter code: Adenylate kinase (216 aa).

Residue 10–15 (GAGKGT) participates in ATP binding. Positions 30-59 (STGDMLREAVKADTPLGIEAKKVMDVGGLI) are NMP. Residues T31, R36, 57-59 (GLI), 85-88 (GFPR), and Q92 each bind AMP. The tract at residues 122–159 (GRRAHLTSGRTYHIVYNPPKVEGIDDITGEELIQRTDD) is LID. ATP-binding positions include R123 and 132-133 (TY). Residues R156 and R167 each coordinate AMP. G202 contacts ATP.

Belongs to the adenylate kinase family. As to quaternary structure, monomer.

The protein resides in the cytoplasm. It carries out the reaction AMP + ATP = 2 ADP. It functions in the pathway purine metabolism; AMP biosynthesis via salvage pathway; AMP from ADP: step 1/1. Catalyzes the reversible transfer of the terminal phosphate group between ATP and AMP. Plays an important role in cellular energy homeostasis and in adenine nucleotide metabolism. In Ruthia magnifica subsp. Calyptogena magnifica, this protein is Adenylate kinase.